We begin with the raw amino-acid sequence, 222 residues long: Putative hemin import ATP-binding protein HrtA (222 aa).

The 220-residue stretch at leucine 3 to serine 222 folds into the ABC transporter domain. Position 39–46 (glycine 39–threonine 46) interacts with ATP.

Belongs to the ABC transporter superfamily. HrtA family. As to quaternary structure, the complex is composed of two ATP-binding proteins (HrtA), two transmembrane proteins (HrtB) and a solute-binding protein.

Its subcellular location is the cell membrane. In terms of biological role, part of the ABC transporter complex hrt involved in hemin import. Responsible for energy coupling to the transport system. The polypeptide is Putative hemin import ATP-binding protein HrtA (hrtA) (Staphylococcus epidermidis (strain ATCC 35984 / DSM 28319 / BCRC 17069 / CCUG 31568 / BM 3577 / RP62A)).